The sequence spans 120 residues: Large ribosomal subunit protein uL18 (120 aa).

The protein belongs to the universal ribosomal protein uL18 family. Part of the 50S ribosomal subunit; part of the 5S rRNA/L5/L18/L25 subcomplex. Contacts the 5S and 23S rRNAs.

Its function is as follows. This is one of the proteins that bind and probably mediate the attachment of the 5S RNA into the large ribosomal subunit, where it forms part of the central protuberance. In Xanthobacter autotrophicus (strain ATCC BAA-1158 / Py2), this protein is Large ribosomal subunit protein uL18.